Reading from the N-terminus, the 175-residue chain is Bcl-2-related protein A1 (175 aa).

The BH1 signature appears at 77-97; sequence KEFEDGIINWGRIVTIFAFEG. The BH2 signature appears at 132 to 147; it reads EWIRQNGGWENGFVKK.

It belongs to the Bcl-2 family. In terms of assembly, interacts directly with BAK1, BID, BMF and BBC3. Interacts directly with BCL2L11/BIM. Interacts with BAX isoform Sigma. Interacts directly with PMAIP1. Interacts with RTL10/BOP. Interacts with ING4. Interacts with UBQLN4. In terms of tissue distribution, seems to be restricted to the hematopoietic compartment. Expressed in peripheral blood, spleen, and bone marrow, at moderate levels in lung, small intestine and testis, at a minimal levels in other tissues. Also found in vascular smooth muscle cells and hematopoietic malignancies.

It localises to the cytoplasm. Functionally, retards apoptosis induced by IL-3 deprivation. May function in the response of hemopoietic cells to external signals and in maintaining endothelial survival during infection. Can inhibit apoptosis induced by serum starvation in the mammary epithelial cell line HC11. The chain is Bcl-2-related protein A1 (BCL2A1) from Homo sapiens (Human).